The following is a 907-amino-acid chain: MFGKILTKLFGSRNDRTLKSLGKTVTKINALEDEYEKLTDEELKAKTTAFRGRLESGETLDDVMSEAFAVVREASKRVFEMRHFDVQMLGGMVLDSNRIAEMRTGEGKTLTATLPAYLNGLTGKGVHVITVNDYLARRDAENNRPLFEFLGLSVGINVAGLGQQEKKAAYDADITYGTNNEFGFDYLRDNMAFSPQERVQRPLHYALIDEVDSILIDEARTPLIISGAAEDSSELYTKINTLIPHLVRQDKEDTEEEIGDGDYSIDEKAKQVHMTERGQEKVEVLLTERGMLAEGDSLYSAANISLLHHVNAALRAHTLFEKDVDYIVQDNEVIIVDEHTGRTMPGRRWSEGLHQAVEAKEGVHIQNENQTLASITFQNFFRQYEKLAGMTGTADTEAFEFQHIYGLDTVVIPTNRPMVRKDHADLVYLTPDEKYAAIIEDIRGCRERGQPVLVGTVSIEQSELLARLMKQEKIPHEVLNAKFHEREADIVAQAGRTGAVTIATNMAGRGTDIVLGGNWAMEIEVLTNPTDEQKAKIKTDWQVRHDEVVAAGGLHILGTERHESRRIDNQLRGRSGRQGDAGSSRFYLSMEDSLMRIFASDRVSSMMKKLGMEKGEAIEHPWVSRAIENAQRKVEARNFDIRKQLLEFDDVANDQRQVVYAQRNELMDAESIQDTIVNIQADVVNGLVDQYIPQQSVEELWDVPGLQTRLEQEYGLKMPVQEWLDKEDDLHEETLRERIVDTWVKSYQAKEEMVGEQVLRQFEKAVMLQTLDGLWKEHLAAMDHLRQGIHLRGYAQKNPKQEYKRESFELFQQMLETLKHDVISVLSKVQVQAQSDVEEMEERRRQEDAKIQRDYQHASAEAIVGAEEAESLSAHTPVVREGEKVGRNDPCPCGSGRKYKQCHGKLT.

ATP-binding positions include Q87, 105–109 (GEGKT), and D512. Positions 869–897 (AESLSAHTPVVREGEKVGRNDPCPCGSGR) are disordered. The span at 878-887 (VVREGEKVGR) shows a compositional bias: basic and acidic residues. Residues C891, C893, C902, and H903 each contribute to the Zn(2+) site.

This sequence belongs to the SecA family. As to quaternary structure, monomer and homodimer. Part of the essential Sec protein translocation apparatus which comprises SecA, SecYEG and auxiliary proteins SecDF-YajC and YidC. Zn(2+) is required as a cofactor.

It localises to the cell inner membrane. The protein resides in the cytoplasm. The enzyme catalyses ATP + H2O + cellular proteinSide 1 = ADP + phosphate + cellular proteinSide 2.. Part of the Sec protein translocase complex. Interacts with the SecYEG preprotein conducting channel. Has a central role in coupling the hydrolysis of ATP to the transfer of proteins into and across the cell membrane, serving both as a receptor for the preprotein-SecB complex and as an ATP-driven molecular motor driving the stepwise translocation of polypeptide chains across the membrane. The polypeptide is Protein translocase subunit SecA (Shewanella sediminis (strain HAW-EB3)).